The following is a 118-amino-acid chain: Large ribosomal subunit protein bL20 (118 aa).

It belongs to the bacterial ribosomal protein bL20 family.

Its function is as follows. Binds directly to 23S ribosomal RNA and is necessary for the in vitro assembly process of the 50S ribosomal subunit. It is not involved in the protein synthesizing functions of that subunit. This is Large ribosomal subunit protein bL20 from Tolumonas auensis (strain DSM 9187 / NBRC 110442 / TA 4).